The following is a 350-amino-acid chain: Phenylalanine--tRNA ligase alpha subunit (350 aa).

Residue E262 participates in Mg(2+) binding.

The protein belongs to the class-II aminoacyl-tRNA synthetase family. Phe-tRNA synthetase alpha subunit type 1 subfamily. In terms of assembly, tetramer of two alpha and two beta subunits. Mg(2+) is required as a cofactor.

It localises to the cytoplasm. The enzyme catalyses tRNA(Phe) + L-phenylalanine + ATP = L-phenylalanyl-tRNA(Phe) + AMP + diphosphate + H(+). The protein is Phenylalanine--tRNA ligase alpha subunit (pheS) of Thermus thermophilus (strain ATCC 27634 / DSM 579 / HB8).